A 130-amino-acid polypeptide reads, in one-letter code: DNA-directed RNA polymerase subunit omega (130 aa).

The disordered stretch occupies residues 110-130 (EELLKGLEGLAPPEEQPEEEE).

Belongs to the RNA polymerase subunit omega family. As to quaternary structure, the RNAP catalytic core consists of 2 alpha, 1 beta, 1 beta' and 1 omega subunit. When a sigma factor is associated with the core the holoenzyme is formed, which can initiate transcription.

The catalysed reaction is RNA(n) + a ribonucleoside 5'-triphosphate = RNA(n+1) + diphosphate. Functionally, promotes RNA polymerase assembly. Latches the N- and C-terminal regions of the beta' subunit thereby facilitating its interaction with the beta and alpha subunits. The chain is DNA-directed RNA polymerase subunit omega from Afipia carboxidovorans (strain ATCC 49405 / DSM 1227 / KCTC 32145 / OM5) (Oligotropha carboxidovorans).